Consider the following 443-residue polypeptide: Phosphoglucosamine mutase (443 aa).

Catalysis depends on Ser100, which acts as the Phosphoserine intermediate. Positions 100, 239, 241, and 243 each coordinate Mg(2+). Phosphoserine is present on Ser100.

This sequence belongs to the phosphohexose mutase family. Mg(2+) serves as cofactor. In terms of processing, activated by phosphorylation.

The catalysed reaction is alpha-D-glucosamine 1-phosphate = D-glucosamine 6-phosphate. Functionally, catalyzes the conversion of glucosamine-6-phosphate to glucosamine-1-phosphate. This chain is Phosphoglucosamine mutase, found in Shewanella sediminis (strain HAW-EB3).